The primary structure comprises 270 residues: PspA protein (270 aa).

The segment at 238 to 270 (MRGEALPAGGTTATPRPATETSGGAIAEQPYGQ) is disordered. Residues 240 to 258 (GEALPAGGTTATPRPATET) show a composition bias toward low complexity.

It belongs to the PspA/Vipp/IM30 family.

It is found in the cytoplasm. In terms of biological role, involved in resistance to stress. Associates with and regulates lipid droplets (LDs) homeostasis under conditions of stress and may regulate non-replicating persistence (NRP). Could be involved in preservation of envelope integrity and tolerance to surface stress. The sequence is that of PspA protein from Mycobacterium tuberculosis (strain ATCC 25177 / H37Ra).